A 156-amino-acid polypeptide reads, in one-letter code: MARKCGAVKLRSCCDPLFEAPEVGRLVNLVMVSGKKTVAARIVYTALAMLSPDRRRSYELLMQALHNIKPSAEIRTRRMGGASYRVPAEICSKRRMSLALRWLKSAAMRRRERYAHVRLYNEILDALSRRGGAVRQRDEVHRLAHANRAFSHSRRG.

This sequence belongs to the universal ribosomal protein uS7 family. Part of the 30S ribosomal subunit. Contacts proteins S9 and S11.

Functionally, one of the primary rRNA binding proteins, it binds directly to 16S rRNA where it nucleates assembly of the head domain of the 30S subunit. Is located at the subunit interface close to the decoding center, probably blocks exit of the E-site tRNA. In Tremblaya princeps, this protein is Small ribosomal subunit protein uS7.